We begin with the raw amino-acid sequence, 289 residues long: ATP synthase subunit a (289 aa).

Transmembrane regions (helical) follow at residues 43–63 (AFHVDTLGWSVLLGVVFLFIF), 104–124 (IAPLALTVFVWIFLLNLIDLV), 160–180 (ISVFALIVFYSIKVKGIGGFL), 193–213 (IVVQILLIPVNFLLEFVTLIA), 232–252 (IFILIAVMFGSGMFLLSALGV), and 259–279 (AVFHILIITLQAFIFMMLTIV).

Belongs to the ATPase A chain family. As to quaternary structure, F-type ATPases have 2 components, CF(1) - the catalytic core - and CF(0) - the membrane proton channel. CF(1) has five subunits: alpha(3), beta(3), gamma(1), delta(1), epsilon(1). CF(0) has three main subunits: a(1), b(2) and c(9-12). The alpha and beta chains form an alternating ring which encloses part of the gamma chain. CF(1) is attached to CF(0) by a central stalk formed by the gamma and epsilon chains, while a peripheral stalk is formed by the delta and b chains.

The protein resides in the cell inner membrane. Key component of the proton channel; it plays a direct role in the translocation of protons across the membrane. The chain is ATP synthase subunit a from Pseudomonas paraeruginosa (strain DSM 24068 / PA7) (Pseudomonas aeruginosa (strain PA7)).